Consider the following 25-residue polypeptide: Ribosome-inactivating protein charantin (25 aa).

Monomer.

The catalysed reaction is Endohydrolysis of the N-glycosidic bond at one specific adenosine on the 28S rRNA.. In terms of biological role, inhibits cell-free translation in a rabbit reticulocyte lysate system. This is Ribosome-inactivating protein charantin from Momordica charantia (Bitter gourd).